The sequence spans 260 residues: MPMTPSEFKNRLLFGSLPRSSSDPTDLQFTEPNVPPSLFSLPEHNDDTATDMAPDQETEQSVSKSIARQALALLVVYLSLGVLIYWLTLDSDNAYQTHPVAVALYFFVVTFCGFLIVHFVVKIGWLDSFCFSVMMVTTVGFGDRAFNTWLGTFLAAVWLLVSTLAVARAFLFLADARADKRNRERAKKVLGESISISQFFAADIDNDGRLSLAEFAIYKLKQMEKITQEDFIQICNQFDKLDRTQSGRITLVDLTTATSV.

Positions M1–V34 are disordered. Residues M1 to R68 are Cytoplasmic-facing. Positions P18–E31 are enriched in polar residues. The helical transmembrane segment at Q69–L89 threads the bilayer. Residues D127–F146 constitute an intramembrane region (pore-forming). A helical membrane pass occupies residues F153–L173. Over A174–V260 the chain is Cytoplasmic. EF-hand domains follow at residues L190–K225 and E229–T256. Ca(2+) contacts are provided by D203, D205, D207, R209, E214, D242, S246, R248, and D253.

This sequence belongs to the two pore domain potassium channel (TC 1.A.1.7) family. Homotetramer. In terms of tissue distribution, expressed in hydathodes and the vascular tissues of roots, stems, leaves and flowers.

It is found in the vacuole membrane. Its function is as follows. Probable calcium-activated potassium channel. This is Potassium inward rectifier (Kir)-like channel 3 (KCO3) from Arabidopsis thaliana (Mouse-ear cress).